A 192-amino-acid chain; its full sequence is Adenylate kinase (192 aa).

ATP is bound at residue glycine 10–threonine 15. An NMP region spans residues serine 30 to valine 59. AMP-binding positions include threonine 31, arginine 36, alanine 57 to valine 59, glycine 85 to arginine 88, and glutamine 92. Residues lysine 126–aspartate 142 form an LID region. Arginine 127 is a binding site for ATP. 2 residues coordinate AMP: arginine 139 and arginine 150. Position 178 (alanine 178) interacts with ATP.

Belongs to the adenylate kinase family. Monomer.

It is found in the cytoplasm. The enzyme catalyses AMP + ATP = 2 ADP. It participates in purine metabolism; AMP biosynthesis via salvage pathway; AMP from ADP: step 1/1. In terms of biological role, catalyzes the reversible transfer of the terminal phosphate group between ATP and AMP. Plays an important role in cellular energy homeostasis and in adenine nucleotide metabolism. The sequence is that of Adenylate kinase from Bartonella bacilliformis (strain ATCC 35685 / KC583 / Herrer 020/F12,63).